Here is a 1850-residue protein sequence, read N- to C-terminus: Vitellogenin-2 (1850 aa).

A signal peptide spans 1-15 (MRGIILALVLTLVGS). The 639-residue stretch at 24–662 (FNSRRSYLYN…SPRTMFPSAI (639 aa)) folds into the Vitellogenin domain. A glycan (N-linked (GlcNAc...) asparagine) is linked at Asn-604. The interval 935–984 (DAPLDVTEEPFQTSERASREHFAMQGPDSMPRKQSHSSREDLRRSTGKRA) is disordered. Asn-1094 carries an N-linked (GlcNAc...) asparagine glycan. Disordered stretches follow at residues 1115–1313 (GTEP…SSSS) and 1338–1362 (EFPK…SHDT). Low complexity predominate over residues 1122 to 1143 (TSSSSSSASSTATSSSSSSASS). Basic and acidic residues predominate over residues 1156–1165 (DQVKQARNKD). The span at 1167–1266 (SSSSRSSKSS…SRSSSSSSKS (100 aa)) shows a compositional bias: low complexity. Residues Asn-1177 and Asn-1188 are each glycosylated (N-linked (GlcNAc...) asparagine). The segment covering 1267–1277 (SSHHSHSHHSG) has biased composition (basic residues). Positions 1278–1291 (HLNGSSSSSSSSRS) are enriched in low complexity. A glycan (N-linked (GlcNAc...) asparagine) is linked at Asn-1280. Basic and acidic residues predominate over residues 1338 to 1350 (EFPKRKLPGDRAT). N-linked (GlcNAc...) asparagine glycosylation is found at Asn-1417, Asn-1597, and Asn-1665. The region spanning 1579 to 1756 (ARCSVSYNKI…SWILEEAPCR (178 aa)) is the VWFD domain. Cystine bridges form between Cys-1581–Cys-1719 and Cys-1604–Cys-1755.

Phosvitin, an egg yolk storage protein, is one of the most highly phosphorylated (10%) proteins in nature. In terms of processing, cathepsin D is responsible for intraoocytic processing of vitellogenin. Post-translationally, may contain intrachain disulfide bonds. In terms of tissue distribution, after incorporation from serum via a specific receptor, it is cleaved into four fragments, heavy and light chain lipovitellins, phosphovitin and YGP40, and YGP40 is released into the yolk plasma before or during compartmentation of lipovitellin-phosvitin complex into the yolk granule.

Functionally, precursor of the major egg-yolk proteins that are sources of nutrients during early development of oviparous organisms. Phosvitin is believed to be of importance in sequestering calcium, iron and other cations for the developing embryo. This is Vitellogenin-2 (VTG2) from Gallus gallus (Chicken).